Consider the following 410-residue polypeptide: Divergent protein kinase domain 1C (410 aa).

Residues 1–19 (MARAAGERGRAARCGRWRR) lie on the Cytoplasmic side of the membrane. The May mediate ER retention signature appears at 18–19 (RR). A helical transmembrane segment spans residues 20–40 (GALLAFAAWTAGWVLAAALLL). The Lumenal segment spans residues 41–410 (RAHPSVLSER…TLKELQEAEK (370 aa)).

Belongs to the DIPK family. In terms of processing, among the many cysteines in the lumenal domain, most are probably involved in disulfide bonds. As to expression, mainly expressed in the brain and eye, some expression in kidney and skeletal muscle.

The protein localises to the endoplasmic reticulum membrane. The sequence is that of Divergent protein kinase domain 1C (Dipk1c) from Mus musculus (Mouse).